The following is a 64-amino-acid chain: Beta-toxin Tf1 (64 aa).

The 62-residue stretch at 1 to 62 (KEGYLMDHEG…VWERATNRCG (62 aa)) folds into the LCN-type CS-alpha/beta domain. Disulfide bonds link Cys11/Cys61, Cys15/Cys37, Cys23/Cys42, and Cys27/Cys44. A Cysteine amide modification is found at Cys61.

Belongs to the long (4 C-C) scorpion toxin superfamily. Sodium channel inhibitor family. Beta subfamily. Expressed by the venom gland.

It is found in the secreted. In terms of biological role, beta toxins bind voltage-independently at site-4 of sodium channels (Nav) and shift the voltage of activation toward more negative potentials thereby affecting sodium channel activation and promoting spontaneous and repetitive firing. This is Beta-toxin Tf1 from Tityus fasciolatus (Central Brazilian scorpion).